We begin with the raw amino-acid sequence, 197 residues long: Pyridoxal 5'-phosphate synthase subunit PdxT (197 aa).

Residue 53-55 (GES) coordinates L-glutamine. The Nucleophile role is filled by cysteine 85. L-glutamine-binding positions include arginine 114 and 142-143 (IR). Residues histidine 179 and glutamate 181 each act as charge relay system in the active site.

The protein belongs to the glutaminase PdxT/SNO family. In the presence of PdxS, forms a dodecamer of heterodimers. Only shows activity in the heterodimer.

It catalyses the reaction aldehydo-D-ribose 5-phosphate + D-glyceraldehyde 3-phosphate + L-glutamine = pyridoxal 5'-phosphate + L-glutamate + phosphate + 3 H2O + H(+). The catalysed reaction is L-glutamine + H2O = L-glutamate + NH4(+). Its pathway is cofactor biosynthesis; pyridoxal 5'-phosphate biosynthesis. Functionally, catalyzes the hydrolysis of glutamine to glutamate and ammonia as part of the biosynthesis of pyridoxal 5'-phosphate. The resulting ammonia molecule is channeled to the active site of PdxS. The protein is Pyridoxal 5'-phosphate synthase subunit PdxT of Thermococcus gammatolerans (strain DSM 15229 / JCM 11827 / EJ3).